Consider the following 246-residue polypeptide: tRNA pseudouridine synthase A (246 aa).

The Nucleophile role is filled by aspartate 52. Tyrosine 111 contacts substrate.

This sequence belongs to the tRNA pseudouridine synthase TruA family. In terms of assembly, homodimer.

It carries out the reaction uridine(38/39/40) in tRNA = pseudouridine(38/39/40) in tRNA. Its function is as follows. Formation of pseudouridine at positions 38, 39 and 40 in the anticodon stem and loop of transfer RNAs. This chain is tRNA pseudouridine synthase A, found in Fervidobacterium nodosum (strain ATCC 35602 / DSM 5306 / Rt17-B1).